Consider the following 685-residue polypeptide: Protein OCTOPUS (685 aa).

Disordered stretches follow at residues M1–H34, R152–E202, and K280–R314. The span at V179–E202 shows a compositional bias: acidic residues. Residues K280 to R291 show a composition bias toward basic residues. Residues N292–R314 are compositionally biased toward basic and acidic residues. S318 carries the phosphoserine modification. The disordered stretch occupies residues V419–R471. Residues L549 to E578 are a coiled coil. The disordered stretch occupies residues S584–G640. Low complexity predominate over residues V601–S611.

This sequence belongs to the OCTOPUS family. As to quaternary structure, interacts with VCC. Post-translationally, phosphorylation at Ser-318 amplifies the promotion of protophloem differentiation. Expressed in provascular cells and phloem initials (e.g. protophloem, metaphloem, sieve element precursor cells and sieve element procambium precursor cells).

The protein resides in the cell membrane. Its subcellular location is the cytoplasm. Potentiates primary root protophloem differentiation. Required, together with VCC, for embryo provasculature development and cotyledon vascular complexity and connectivity. Regulates roots architecture. Mediates the recruitment of ASK7/BIN2 to the plasma membrane. This is Protein OCTOPUS from Arabidopsis thaliana (Mouse-ear cress).